Consider the following 464-residue polypeptide: GTPase Der (464 aa).

EngA-type G domains lie at 3-166 (PVIA…PEVE) and 178-351 (IRIA…DSAF). GTP contacts are provided by residues 9 to 16 (GRPNVGKS), 56 to 60 (DTGGL), 118 to 121 (NKTD), 184 to 191 (GRPNAGKS), 231 to 235 (DTAGV), and 296 to 299 (NKWD). Residues 352–436 (IKVSTNHLTK…PIRLEFKTGE (85 aa)) form the KH-like domain.

It belongs to the TRAFAC class TrmE-Era-EngA-EngB-Septin-like GTPase superfamily. EngA (Der) GTPase family. In terms of assembly, associates with the 50S ribosomal subunit.

Functionally, GTPase that plays an essential role in the late steps of ribosome biogenesis. In Thioalkalivibrio sulfidiphilus (strain HL-EbGR7), this protein is GTPase Der.